The following is a 58-amino-acid chain: UPF0391 membrane protein OCAR_5266/OCA5_c27040 (58 aa).

2 helical membrane passes run 4–24 (WVVT…GGIA) and 30–50 (IAKI…VVGL).

It belongs to the UPF0391 family.

The protein localises to the cell membrane. The polypeptide is UPF0391 membrane protein OCAR_5266/OCA5_c27040 (Afipia carboxidovorans (strain ATCC 49405 / DSM 1227 / KCTC 32145 / OM5) (Oligotropha carboxidovorans)).